Here is a 254-residue protein sequence, read N- to C-terminus: Zinc import ATP-binding protein ZnuC (254 aa).

The ABC transporter domain maps to 5–221 (ICAADLSVSH…PAYRALFGSE (217 aa)). Position 38–45 (38–45 (GPNGSGKS)) interacts with ATP. Basic and acidic residues predominate over residues 234–245 (DHDHDHVAEGHR). The segment at 234–254 (DHDHDHVAEGHRHGPACAHPH) is disordered.

This sequence belongs to the ABC transporter superfamily. Zinc importer (TC 3.A.1.15.5) family. In terms of assembly, the complex is composed of two ATP-binding proteins (ZnuC), two transmembrane proteins (ZnuB) and a solute-binding protein (ZnuA).

It localises to the cell inner membrane. It carries out the reaction Zn(2+)(out) + ATP(in) + H2O(in) = Zn(2+)(in) + ADP(in) + phosphate(in) + H(+)(in). Its function is as follows. Part of the ABC transporter complex ZnuABC involved in zinc import. Responsible for energy coupling to the transport system. The chain is Zinc import ATP-binding protein ZnuC from Paracoccus denitrificans (strain Pd 1222).